A 144-amino-acid polypeptide reads, in one-letter code: Transmembrane protein 170A (144 aa).

Topologically, residues 1–50 are lumenal; the sequence is MEREGSGGSGGSAGLLQQILSLKVVPRVGNGTLCPNSTSLCSFPEMWYGV. N-linked (GlcNAc...) asparagine glycans are attached at residues Asn30 and Asn36. The chain crosses the membrane as a helical span at residues 51-71; that stretch reads FLWALVSSLFFHVPAGLLALF. Residues 72–85 lie on the Cytoplasmic side of the membrane; that stretch reads TLRHHKYGRFMSVS. A helical membrane pass occupies residues 86–106; that stretch reads ILLMGIVGPITAGILTSAAIA. At 107-116 the chain is on the lumenal side; the sequence is GVYRAAGKEM. Residues 117–137 traverse the membrane as a helical segment; sequence IPFEALTLGTGQTFCVLVVSF. At 138–144 the chain is on the cytoplasmic side; that stretch reads LRILATL.

The protein belongs to the TMEM170 family. As to quaternary structure, interacts with RTN4.

The protein resides in the endoplasmic reticulum membrane. The protein localises to the nucleus envelope. Its function is as follows. Acts as a regulator of endoplasmic reticulum (ER) and nuclear envelope (NE) morphogenesis. Affects the ratio between tubular ER and ER sheets by promoting sheet formation at the expense of tubules. Influences NE expansion, nuclear pore complex formation and proper localization of inner nuclear membrane proteins. The chain is Transmembrane protein 170A (TMEM170A) from Homo sapiens (Human).